A 756-amino-acid polypeptide reads, in one-letter code: Rab11 family-interacting protein 3 (756 aa).

Over residues 1 to 24 (MASAPPASPPGSEPPGPDPEPGGP) the composition is skewed to pro residues. Positions 1–204 (MASAPPASPP…SEPVGSQEDG (204 aa)) are disordered. An important for binding to DYNC1LI1 region spans residues 2-435 (ASAPPASPPG…RLSSKKVARY (434 aa)). A compositionally biased stretch (low complexity) spans 27 to 39 (PGAAQLAPGPAEL). Position 52 is a phosphoserine (serine 52). The span at 53-68 (PGLDEPAPGAAADGGA) shows a compositional bias: low complexity. The span at 84–94 (DPGPSAPPPRS) shows a compositional bias: pro residues. Phosphoserine; by CDK1 is present on serine 102. 2 consecutive EF-hand domains span residues 202 to 237 (EDGP…YGAE) and 234 to 269 (YGAE…IRNG). Residues aspartate 215, aspartate 217, aspartate 219, aspartate 226, aspartate 247, serine 249, and aspartate 258 each contribute to the Ca(2+) site. 6 positions are modified to phosphoserine: serine 281, serine 348, serine 488, serine 538, serine 647, and serine 648. An ARF-binding domain (ABD) region spans residues 484–588 (GEQHSRLRQE…LLDEIESLTL (105 aa)). Residues 485-694 (EQHSRLRQEN…NGQIITLSIQ (210 aa)) are a coiled coil. The disordered stretch occupies residues 645 to 664 (RSSSMGLQEYHSRARESELE). Residues 654-664 (YHSRARESELE) are compositionally biased toward basic and acidic residues. The FIP-RBD domain occupies 694–756 (QGAKSLFSTA…ETNPSILEVK (63 aa)).

As to quaternary structure, homodimer. Interacts with RAB11A; the interaction is direct and is required for the recruitment to endosomes. Interacts with RAB11B. Forms a ternary complex with RAB11A and dynein intermediate chain DYNC1LI1; RAB11FIP3 links RAB11A to dynein and the interaction regulates endocytic trafficking. Interacts with dynein intermediate chain and dynactin (DCTN1); the interaction activates dynein processivity. Interacts with ARF6 and EXOC7; the interaction serves for recruitment and tethering of recycling endosomes-derived vesicles to the cleavage furrow/midbody. Interacts with RACGAP1/MgcRacGAP; the interaction occurs at late telophase and is required for recruitment and tethering of recycling endosomes-derived vesicles to the cleavage furrow/midbody. Forms a complex with RAB11A and Rabin8/RAB3IP, probably a heterohexamer with two of each protein subunit, where RAB3IP and RAB11FIP3 simultaneously bind to RAB11A; the complex promotes preciliary trafficking. Forms a complex containing RAB11A, ASAP1, RAB3IP, RAP11FIP3 and ARF4; the complex promotes preciliary trafficking; the complex binds to RHO in photoreceptor cells and promotes RHO ciliary transport. Interacts with RAB11FIP4. Interacts with RAB25. In terms of processing, phosphorylated at Ser-102 by CDK1 during metaphase, and dephosphorylated as cells enter telophase.

It localises to the endosome membrane. Its subcellular location is the recycling endosome membrane. The protein resides in the cytoplasm. The protein localises to the cytoskeleton. It is found in the microtubule organizing center. It localises to the centrosome. Its subcellular location is the cleavage furrow. The protein resides in the midbody. The protein localises to the golgi apparatus membrane. It is found in the golgi apparatus. It localises to the trans-Golgi network membrane. Its function is as follows. Downstream effector molecule for Rab11 GTPase which is involved in endocytic trafficking, cytokinesis and intracellular ciliogenesis by participating in membrane delivery. Recruited by Rab11 to endosomes where it links Rab11 to dynein motor complex. The functional Rab11-RAB11FIP3-dynein complex regulates the movement of peripheral sorting endosomes (SE) along microtubule tracks toward the microtubule organizing center/centrosome, generating the endocytic recycling compartment (ERC) during interphase of cell cycle. Facilitates the interaction between dynein and dynactin and activates dynein processivity. Binding with ASAP1 is needed to regulate the pericentrosomal localization of recycling endosomes. The Rab11-RAB11FIP3 complex is also implicated in the transport during telophase of vesicles derived from recycling endosomes to the cleavage furrow via centrosome-anchored microtubules, where the vesicles function to deliver membrane during late cytokinesis and abscission. The recruitment of Rab11-RAB11FIP3-containing endosomes to the cleavage furrow and tethering to the midbody is co-mediated by RAB11FIP3 interaction with ARF6-exocyst and RACGAP1-MKLP1 tethering complexes. Also involved in the Rab11-Rabin8-Rab8 ciliogenesis cascade by facilitating the orderly assembly of a ciliary targeting complex containing Rab11, ASAP1, Rabin8/RAB3IP, RAB11FIP3 and ARF4, which directs preciliary vesicle trafficking to mother centriole and ciliogenesis initiation. Also promotes the activity of Rab11 and ASAP1 in the ARF4-dependent Golgi-to-cilia transport of the sensory receptor rhodopsin. Competes with WDR44 for binding to Rab11, which controls intracellular ciliogenesis pathway. May play a role in breast cancer cell motility by regulating actin cytoskeleton. The polypeptide is Rab11 family-interacting protein 3 (Homo sapiens (Human)).